Here is a 168-residue protein sequence, read N- to C-terminus: Photosystem I assembly protein Ycf3 (168 aa).

3 TPR repeats span residues 35–68, 72–105, and 120–153; these read AFTY…EIDP, SYIL…NPFL, and GEQA…TPGN.

The protein belongs to the Ycf3 family.

It localises to the plastid. Its subcellular location is the chloroplast thylakoid membrane. Essential for the assembly of the photosystem I (PSI) complex. May act as a chaperone-like factor to guide the assembly of the PSI subunits. The polypeptide is Photosystem I assembly protein Ycf3 (Drimys granadensis).